We begin with the raw amino-acid sequence, 880 residues long: Alanine--tRNA ligase (880 aa).

The protein belongs to the class-II aminoacyl-tRNA synthetase family.

The protein resides in the cytoplasm. It carries out the reaction tRNA(Ala) + L-alanine + ATP = L-alanyl-tRNA(Ala) + AMP + diphosphate. In terms of biological role, catalyzes the attachment of alanine to tRNA(Ala) in a two-step reaction: alanine is first activated by ATP to form Ala-AMP and then transferred to the acceptor end of tRNA(Ala). Also edits incorrectly charged Ser-tRNA(Ala) and Gly-tRNA(Ala) via its editing domain. This Lactiplantibacillus plantarum (strain ATCC BAA-793 / NCIMB 8826 / WCFS1) (Lactobacillus plantarum) protein is Alanine--tRNA ligase (alaS).